The following is a 165-amino-acid chain: Nucleotide-binding protein PMN2A_1813 (165 aa).

This sequence belongs to the YajQ family.

In terms of biological role, nucleotide-binding protein. The chain is Nucleotide-binding protein PMN2A_1813 from Prochlorococcus marinus (strain NATL2A).